The primary structure comprises 221 residues: Serine/arginine-rich splicing factor 2 (221 aa).

An N-acetylserine modification is found at S2. Residue S2 is modified to Phosphoserine. Residues 14–92 (TSLKVDNLTY…RELRVQMARY (79 aa)) enclose the RRM domain. T22 and T25 each carry phosphothreonine. At S26 the chain carries Phosphoserine. K52 carries the post-translational modification N6-acetyllysine. The segment at 92-221 (YGRPPDSHHS…SPEEEGAVSS (130 aa)) is disordered. 2 stretches are compositionally biased toward basic residues: residues 117–171 (RRSR…RSKS) and 179–189 (SRSRSRSRSRS). Residues S189, S191, S204, S206, S208, S212, and S220 each carry the phosphoserine modification. Over residues 212–221 (SPEEEGAVSS) the composition is skewed to acidic residues.

Belongs to the splicing factor SR family. In vitro, self-associates and binds SRSF1/SFRS1 (ASF/SF2), SNRP70 and U2AF1 but not U2AF2. Binds SREK1/SFRS12. Interacts with CCNL1 and CCNL2. Interacts with SCAF11. Interacts with ZRSR2/U2AF1-RS2. Interacts with CCDC55 (via C-terminus). Interacts with BRDT. Extensively phosphorylated on serine residues in the RS domain. Phosphorylated by SRPK2 and this causes its redistribution from the nuclear speckle to nucleoplasm and controls cell fate decision in response to cisplatin treatment. KAT5/TIP60 inhibits its phosphorylation by preventing SRPK2 nuclear translocation. In terms of processing, acetylation on Lys-52 by KAT5/TIP60 promotes its proteasomal degradation. This effect is counterbalanced by HDAC6, which positively controls SRSF2 protein level by deacetylating it and preventing its proteasomal degradation.

The protein resides in the nucleus. It is found in the nucleoplasm. Its subcellular location is the nucleus speckle. Functionally, necessary for the splicing of pre-mRNA. It is required for formation of the earliest ATP-dependent splicing complex and interacts with spliceosomal components bound to both the 5'- and 3'-splice sites during spliceosome assembly. It also is required for ATP-dependent interactions of both U1 and U2 snRNPs with pre-mRNA. Interacts with other spliceosomal components, via the RS domains, to form a bridge between the 5'- and 3'-splice site binding components, U1 snRNP and U2AF. Binds to purine-rich RNA sequences, either 5'-AGSAGAGTA-3' (S=C or G) or 5'-GTTCGAGTA-3'. Can bind to beta-globin mRNA and commit it to the splicing pathway. The phosphorylated form (by SRPK2) is required for cellular apoptosis in response to cisplatin treatment. The polypeptide is Serine/arginine-rich splicing factor 2 (SRSF2) (Pan troglodytes (Chimpanzee)).